Consider the following 142-residue polypeptide: MAKKVTAYIKLQVKAGQASPSPPVGPALGQRGLNIMDFCKAFNAGTQKIEQGLPIPVVITAYSDRTFTFITKSPPASILLKKIVGIQSGSKRPNTEKVGKVTRKQLEDIAKTKELDMTAADLDAAVRTIAGSARSMGLVVEG.

This sequence belongs to the universal ribosomal protein uL11 family. In terms of assembly, part of the ribosomal stalk of the 50S ribosomal subunit. Interacts with L10 and the large rRNA to form the base of the stalk. L10 forms an elongated spine to which L12 dimers bind in a sequential fashion forming a multimeric L10(L12)X complex. One or more lysine residues are methylated.

Forms part of the ribosomal stalk which helps the ribosome interact with GTP-bound translation factors. The chain is Large ribosomal subunit protein uL11 from Xylella fastidiosa (strain Temecula1 / ATCC 700964).